Consider the following 173-residue polypeptide: Photosystem I assembly protein Ycf3 (173 aa).

TPR repeat units lie at residues 35–68 (AFAY…EDDP), 72–105 (SYIL…NPRM), and 120–153 (GEKA…APNN).

It belongs to the Ycf3 family.

The protein localises to the cellular thylakoid membrane. In terms of biological role, essential for the assembly of the photosystem I (PSI) complex. May act as a chaperone-like factor to guide the assembly of the PSI subunits. This chain is Photosystem I assembly protein Ycf3, found in Picosynechococcus sp. (strain ATCC 27264 / PCC 7002 / PR-6) (Agmenellum quadruplicatum).